Consider the following 187-residue polypeptide: Ribosome-recycling factor (187 aa).

The protein belongs to the RRF family.

It localises to the cytoplasm. Functionally, responsible for the release of ribosomes from messenger RNA at the termination of protein biosynthesis. May increase the efficiency of translation by recycling ribosomes from one round of translation to another. This Parvibaculum lavamentivorans (strain DS-1 / DSM 13023 / NCIMB 13966) protein is Ribosome-recycling factor.